A 277-amino-acid chain; its full sequence is Large ribosomal subunit protein uL2c (277 aa).

Positions 226 to 249 are disordered; that stretch reads NPIDHPHGGGEGRAPIGREKPLTP. Positions 229–246 are enriched in basic and acidic residues; it reads DHPHGGGEGRAPIGREKP.

The protein belongs to the universal ribosomal protein uL2 family. In terms of assembly, part of the 50S ribosomal subunit.

The protein resides in the plastid. The protein localises to the chloroplast. The chain is Large ribosomal subunit protein uL2c (rpl2) from Physcomitrium patens (Spreading-leaved earth moss).